Reading from the N-terminus, the 417-residue chain is MTLPVLIIGAGLSGLTTARLLTNAHIPCIVFEASPPSRTQGYAISLRDWGFNALLRALGNLPLSSLTRAVAPDRHIGGWGWLDQSWRNNQTGEIIMMPPKESKEKPTILRANRNALRQWIADAGVGEDEEIDVRYGHRLVGVQLLREGGDGNVVTAEFANGATYTGSLLIAADGVHSTVRTLILPAVKPEILPVLVYHGDFKLSREEYECVIRPHAGESTIVAGVGDGFNTPLTVCDVTSTTVHMDWTYSRPSIGDNDPLYNPNITSEEAKVIPEALIEEINAKKLGEPWSLFLNGEAMRRHRVFNWLTRCVSMERSDVNSCTGKGVVFVGDSWHAMPIFGGEGGNHAIFDGIELAKMLEVAWGRSKEDVQAAIGKYYDKSWRRCNDAVRRSKQRFYQLHRPISEWIEIAEKQKMRA.

The first 18 residues, 1-18 (MTLPVLIIGAGLSGLTTA), serve as a signal peptide directing secretion. Positions 32, 43, 117, 332, and 345 each coordinate FAD.

This sequence belongs to the paxM FAD-dependent monooxygenase family. It depends on FAD as a cofactor.

It carries out the reaction 3,6,8,9-tetrahydroxy-1-oxo-3-(2-oxopropyl)-1,2,3,4-tetrahydroanthracene-2-carboxyl-[ACP] + NADPH + O2 + H(+) = 2,3,6,8,9-pentahydroxy-1-oxo-3-(2-oxopropyl)-1,2,3,4-tetrahydroanthracene-2-carboxyl-[ACP] + NADP(+) + H2O. The protein operates within secondary metabolite biosynthesis. Functionally, FAD-dependent monooxygenase; part of the gene cluster that mediates the biosynthesis of asperthecin, an anthraquinone pigment. Polyketide synthase (PKS) aptA catalyzes the formation of the aromatic polyketide from acetyl coenzyme A and seven malonyl coenzyme A molecules. Polyketide is subsequently hydrolyzed by the action of the hydrolase aptB into endocrocin-9-anthrone. Endocrocin-9-anthrone is then oxidized into endocrocin by the monooxygenase aptC. Endocrocin is likely to decarboxylate spontaneously to form emodin which explains why there is no decarboxylase in the asperthecin biosynthesis cluster. Finally, aptC or another endogenous oxygenase catalyzes additional oxidation steps to form asperthecin. The protein is FAD-dependent monooxygenase aptC of Emericella nidulans (strain FGSC A4 / ATCC 38163 / CBS 112.46 / NRRL 194 / M139) (Aspergillus nidulans).